The primary structure comprises 578 residues: Putative multidrug export ATP-binding/permease protein SAB1799c (578 aa).

Residues 1-15 (MIKRYLQFVKPYKYR) lie on the Cytoplasmic side of the membrane. A helical transmembrane segment spans residues 16-36 (IFATIIVGIIKFGIPMLIPLL). In terms of domain architecture, ABC transmembrane type-1 spans 16–306 (IFATIIVGII…LVASFTTLTQ (291 aa)). Residues 37-59 (IKYAIDGVINNHALTTDEKVHHL) lie on the Extracellular side of the membrane. Residues 60-80 (TIAIGIALFIFVIVRPPIEFI) traverse the membrane as a helical segment. At 81–138 (RQYLAQWTSNKILYDIRKKLYNHLQALSARFYANNQVGQVISRVINDVEQTKDFILTG) the chain is on the cytoplasmic side. A helical membrane pass occupies residues 139-159 (LMNIWLDCITIIIALSIMFFL). Residues 160-162 (DVK) are Extracellular-facing. Residues 163-183 (LTLAALFIFPFYILTVYVFFG) traverse the membrane as a helical segment. At 184–242 (RLRKLTRERSQALAEVQGFLHERVQGISVVKSFAIEDNEAKNFDKKNANFLTRALKHTR) the chain is on the cytoplasmic side. The helical transmembrane segment at 243–262 (WNAYSFATINTVTDIGPIIV) threads the bilayer. The Extracellular portion of the chain corresponds to 263-267 (IGVGA). A helical transmembrane segment spans residues 268 to 287 (YLAISGSITVGTLAAFVGYL). Over 288-578 (ELLFGPLRRL…YEHLYSIQNL (291 aa)) the chain is Cytoplasmic. Residues 340 to 575 (IDIYHVNFQY…QGAYEHLYSI (236 aa)) form the ABC transporter domain. 374–381 (GMSGGGKS) lines the ATP pocket.

This sequence belongs to the ABC transporter superfamily. In terms of assembly, homodimer.

The protein localises to the cell membrane. May be involved in multidrug export. Transmembrane domains (TMD) form a pore in the cell membrane and the ATP-binding domain (NBD) is responsible for energy generation. This chain is Putative multidrug export ATP-binding/permease protein SAB1799c, found in Staphylococcus aureus (strain bovine RF122 / ET3-1).